The chain runs to 83 residues: Translational regulator CsrA (83 aa).

This sequence belongs to the CsrA/RsmA family. As to quaternary structure, homodimer; the beta-strands of each monomer intercalate to form a hydrophobic core, while the alpha-helices form wings that extend away from the core.

The protein localises to the cytoplasm. Its function is as follows. A translational regulator that binds mRNA to regulate translation initiation and/or mRNA stability. Usually binds in the 5'-UTR at or near the Shine-Dalgarno sequence preventing ribosome-binding, thus repressing translation. Its main target seems to be the major flagellin gene, while its function is anatagonized by FliW. This chain is Translational regulator CsrA, found in Thermotoga petrophila (strain ATCC BAA-488 / DSM 13995 / JCM 10881 / RKU-1).